We begin with the raw amino-acid sequence, 382 residues long: Leucoanthocyanidin reductase (382 aa).

NADP(+) contacts are provided by residues 19–25, arginine 44, and lysine 52; that span reads GGTGFIG. The Proton acceptor role is filled by lysine 142. Arginine 146 contributes to the NADP(+) binding site.

Belongs to the NmrA-type oxidoreductase family. Isoflavone reductase subfamily. In terms of assembly, monomer.

It carries out the reaction (2R,3S)-catechin + NADP(+) + H2O = (2R,3S,4S)-leucocyanidin + NADPH + H(+). It functions in the pathway flavonoid metabolism; proanthocyanidin biosynthesis. In terms of biological role, catalyzes the synthesis of catechin from 3,4-cis-leucocyanidin. Also synthesizes afzelechin and gallocatechin. This is Leucoanthocyanidin reductase (LAR) from Desmodium uncinatum (Silverleaf Spanish clover).